The sequence spans 687 residues: MLAKSLGWLLAVSRRNYCMGSRTALASRPWSKHLADPQIDPTAYVHSFANVVGDVRIQPGVSVAPGSSIRADEGTPFWIGGNVLIQHGVVIHGLETGRVLGDDDQEYSVWIGPGTCVAHLALVHGPVYLGANCFIGFRSTVLNARVGDGAVVMMHSLVQDVEIPPNKLVPSGAMITQQHQADSLPDVQAGDRHFVQQIAAMHGQSASPTQGTDPTVCVLPESLPAVTPVTETPYINSIDNMSINSDITNQIRSLLAQGYGIGAEHANERRFKTKSWQSCGTADGFRPDQVIATVEGWLQEFAGEYVRLIGIDQGAKRRVVEVIIQRPGDVPGSPSRGTTTTKALSSGGSGRSAVAHQTGNLAGDSANQLRALLHQGYKIGLEYASARRFKTGSWLTGGTIGSHREGEALQELNRFLADHTNEYVRIIGIDPAGKRRVAEIVVHRPNGNGNGKPSSSSSSVGYKSAPVSSAGGSSAGGLTPEVIATVRGLLANGHSIGTEHTDKRRFKAKSWDTCPTIDGGREAEVLAKLEACLADHAGEYVRIIGIDRVGKRRVLEQIIQRPGDNVVAGRSPSSSSASTSSSASSNGFGSGNGGGYSNSAVRLDNSVVTQVRSLLAQGYKIGTEHTDKRRFKAKSWQSCAPITSTHESEVLRALEGCLADHNGEYVRLLGIDPTAKRRVLETIIQRP.

The tract at residues 242-327 is rbcS-like repeat 1, SSUL1; the sequence is SINSDITNQI…RVVEVIIQRP (86 aa). Disordered regions lie at residues 328–355 and 442–476; these read GDVP…SAVA and VHRP…SSAG. Residues 335–346 show a composition bias toward polar residues; it reads SRGTTTTKALSS. Residues 366 to 445 form a rbcS-like repeat 2, SSUL2 region; that stretch reads ANQLRALLHQ…RVAEIVVHRP (80 aa). Residues 451-472 show a composition bias toward low complexity; that stretch reads GKPSSSSSSVGYKSAPVSSAGG. Residues 480–562 are rbcS-like repeat 3, SSUL3; that stretch reads PEVIATVRGL…RVLEQIIQRP (83 aa). A disordered region spans residues 565–590; sequence NVVAGRSPSSSSASTSSSASSNGFGS. The segment covering 568–587 has biased composition (low complexity); it reads AGRSPSSSSASTSSSASSNG. A rbcS-like repeat 4, SSUL4 region spans residues 599 to 687; it reads SAVRLDNSVV…RVLETIIQRP (89 aa).

The protein belongs to the gamma-class carbonic anhydrase family. Probably forms homotrimers. Full length CcmM interacts with CcaA, CcmK1, CcmK2, CcmK4, CcmL, CcmN and itself, while the N-terminus of CcmM (first 249 residues) only interacts with CcaA, CcmM and CcmN. A probable CcmM-CcaA-CcmN complex as well as a CcaA-RuBisCO-CcmM complex can also be isolated. Interacts with full-length CcaA and the first 220 residues of CcaA; surface residues Gln-177 to Gln-188 are responsible in part for binding. Multiple forms of the protein of 73 (full length), 62, 52 (the most predominant form) and 36 kDa are seen even in the presence of protease inhibitors. CcmM52 interacts with CcaA.

The protein localises to the carboxysome. Functionally, functions as a scaffold protein for the assembly of beta-carboxysomes, initiates carboxysome assembly via its N-terminal domain binding to CcaA, CcmK and CcmL. Binds HCO(3)-, suggesting it may play a role in the activity or regulation of bicarbonate dehydration. Also initiates carboxysome assembly by coalescing RuBisCO (ribulose bisphosphate carboxylase, rbcL-rbcS) via its SSU-like domains. Produced as a full-length and a shorter form; both forms are required for correct carboxysome assembly and growth. Despite its strong similarity to gamma-class carbonic anhydrase (CA) it does not have detectable CA activity. In terms of biological role, beta-carboxysome assembly initiates when soluble RuBisCO is condensed into a liquid matrix in a pre-carboxysome by the RbcS-like domains of probably both forms of CcmM. CcmN interacts with the N-terminus of full length CcmM, and then recruits the shell proteins (CcmK) via CcmN's encapsulation peptide. CcmM73 also interacts with CcmK proteins and CcmL directly. Shell formation requires CcmK proteins and CcmO. CcmL caps the otherwise elongated carboxysome. Once fully encapsulated carboxysomes are formed, they migrate within the cell probably via interactions with the cytoskeleton. The protein is Carboxysome assembly protein CcmM of Synechocystis sp. (strain ATCC 27184 / PCC 6803 / Kazusa).